Reading from the N-terminus, the 351-residue chain is Nicotinate-nucleotide--dimethylbenzimidazole phosphoribosyltransferase (351 aa).

The active-site Proton acceptor is glutamate 317.

The protein belongs to the CobT family.

The enzyme catalyses 5,6-dimethylbenzimidazole + nicotinate beta-D-ribonucleotide = alpha-ribazole 5'-phosphate + nicotinate + H(+). The protein operates within nucleoside biosynthesis; alpha-ribazole biosynthesis; alpha-ribazole from 5,6-dimethylbenzimidazole: step 1/2. In terms of biological role, catalyzes the synthesis of alpha-ribazole-5'-phosphate from nicotinate mononucleotide (NAMN) and 5,6-dimethylbenzimidazole (DMB). The polypeptide is Nicotinate-nucleotide--dimethylbenzimidazole phosphoribosyltransferase (Pseudomonas putida (strain ATCC 47054 / DSM 6125 / CFBP 8728 / NCIMB 11950 / KT2440)).